A 66-amino-acid polypeptide reads, in one-letter code: Small ribosomal subunit protein bS21 (66 aa).

The protein belongs to the bacterial ribosomal protein bS21 family.

In Bdellovibrio bacteriovorus (strain ATCC 15356 / DSM 50701 / NCIMB 9529 / HD100), this protein is Small ribosomal subunit protein bS21.